The following is a 349-amino-acid chain: Interleukin-10 receptor subunit beta (349 aa).

Positions 1–19 (MAPCVAGWLGGFLLVPALG) are cleaved as a signal peptide. At 20–220 (MIPPPEKVRM…RTGNDEITPS (201 aa)) the chain is on the extracellular side. 2 Fibronectin type-III domains span residues 23–111 (PPEK…VEDT) and 112–215 (IIGP…TGND). Asn49 is a glycosylation site (N-linked (GlcNAc...) asparagine). Cys66 and Cys74 form a disulfide bridge. N-linked (GlcNAc...) asparagine glycosylation is found at Asn102, Asn161, and Asn199. Cys188 and Cys209 form a disulfide bridge. The chain crosses the membrane as a helical span at residues 221–241 (WIVAIILIVSVLVVFLFLLGC). Topologically, residues 242–349 (FVVLWLIYKK…PKLLTSTSEV (108 aa)) are cytoplasmic. The residue at position 299 (Ser299) is a Phosphoserine. The segment at 300–349 (EESEGSKQSPEDNCASEPPSDPGPRELESKDEAPSPPHDDPKLLTSTSEV) is disordered. The segment covering 322 to 341 (GPRELESKDEAPSPPHDDPK) has biased composition (basic and acidic residues).

It belongs to the type II cytokine receptor family. Heterodimer with IFNLR1.

The protein localises to the membrane. Shared cell surface receptor required for the activation of five class 2 cytokines: IL10, IL22, IL26, IL28, and IFNL1. The IFNLR1/IL10RB dimer is a receptor for the cytokine ligands IFNL2 and IFNL3 and mediates their antiviral activity. The ligand/receptor complex stimulate the activation of the JAK/STAT signaling pathway leading to the expression of IFN-stimulated genes (ISG), which contribute to the antiviral state. The polypeptide is Interleukin-10 receptor subunit beta (Il10rb) (Mus musculus (Mouse)).